The sequence spans 109 residues: Beta-keratin-related protein (109 aa).

Residue Ser-2 is modified to N-acetylserine.

This sequence belongs to the avian keratin family.

This is Beta-keratin-related protein (BKJ) from Coturnix japonica (Japanese quail).